We begin with the raw amino-acid sequence, 787 residues long: Zinc finger protein 227 (787 aa).

One can recognise a KRAB domain in the interval Val23–Ser94. 18 C2H2-type zinc fingers span residues His243–His275, Tyr312–His334, Tyr340–His362, Tyr368–His390, Tyr396–His418, Tyr424–His446, Tyr452–His474, Tyr480–His502, Phe508–His530, Tyr536–His558, Tyr564–His586, Tyr592–His614, Tyr620–His642, Tyr648–His670, Tyr676–His698, His704–His726, Phe732–His754, and Tyr760–His782.

The protein belongs to the krueppel C2H2-type zinc-finger protein family.

Its subcellular location is the nucleus. May be involved in transcriptional regulation. The sequence is that of Zinc finger protein 227 (ZNF227) from Bos taurus (Bovine).